The chain runs to 373 residues: Chaperone protein DnaJ (373 aa).

Residues 5-70 (DYYEVLGLQK…EKKSNYDQFG (66 aa)) form the J domain. A CR-type zinc finger spans residues 132-214 (GVEKEITVNR…CRGNGNVRKT (83 aa)). Residues Cys-145, Cys-148, Cys-162, Cys-165, Cys-188, Cys-191, Cys-202, and Cys-205 each contribute to the Zn(2+) site. 4 CXXCXGXG motif repeats span residues 145-152 (CEHCNGSG), 162-169 (CPTCSGTG), 188-195 (CDRCSGTG), and 202-209 (CTHCRGNG).

This sequence belongs to the DnaJ family. In terms of assembly, homodimer. Zn(2+) serves as cofactor.

Its subcellular location is the cytoplasm. Functionally, participates actively in the response to hyperosmotic and heat shock by preventing the aggregation of stress-denatured proteins and by disaggregating proteins, also in an autonomous, DnaK-independent fashion. Unfolded proteins bind initially to DnaJ; upon interaction with the DnaJ-bound protein, DnaK hydrolyzes its bound ATP, resulting in the formation of a stable complex. GrpE releases ADP from DnaK; ATP binding to DnaK triggers the release of the substrate protein, thus completing the reaction cycle. Several rounds of ATP-dependent interactions between DnaJ, DnaK and GrpE are required for fully efficient folding. Also involved, together with DnaK and GrpE, in the DNA replication of plasmids through activation of initiation proteins. This is Chaperone protein DnaJ from Clostridium botulinum (strain Alaska E43 / Type E3).